The sequence spans 393 residues: NAD(P)H-quinone oxidoreductase subunit H, chloroplastic (393 aa).

Belongs to the complex I 49 kDa subunit family. In terms of assembly, NDH is composed of at least 16 different subunits, 5 of which are encoded in the nucleus.

It localises to the plastid. It is found in the chloroplast thylakoid membrane. The catalysed reaction is a plastoquinone + NADH + (n+1) H(+)(in) = a plastoquinol + NAD(+) + n H(+)(out). It catalyses the reaction a plastoquinone + NADPH + (n+1) H(+)(in) = a plastoquinol + NADP(+) + n H(+)(out). NDH shuttles electrons from NAD(P)H:plastoquinone, via FMN and iron-sulfur (Fe-S) centers, to quinones in the photosynthetic chain and possibly in a chloroplast respiratory chain. The immediate electron acceptor for the enzyme in this species is believed to be plastoquinone. Couples the redox reaction to proton translocation, and thus conserves the redox energy in a proton gradient. The chain is NAD(P)H-quinone oxidoreductase subunit H, chloroplastic from Nasturtium officinale (Watercress).